We begin with the raw amino-acid sequence, 342 residues long: Galactose mutarotase (342 aa).

Position 2 is an N-acetylalanine (alanine 2). Residue serine 14 is modified to Phosphoserine. Beta-D-galactose-binding positions include 81 to 82 (NR) and histidine 107. Serine 124 bears the Phosphoserine mark. Catalysis depends on histidine 176, which acts as the Proton donor. Residues 176 to 178 (HSY), aspartate 243, glutamine 279, and glutamate 307 each bind beta-D-galactose. The active-site Proton acceptor is glutamate 307.

This sequence belongs to the aldose epimerase family. In terms of assembly, monomer.

The protein resides in the cytoplasm. It catalyses the reaction alpha-D-galactose = beta-D-galactose. The catalysed reaction is alpha-D-glucose = beta-D-glucose. It functions in the pathway carbohydrate metabolism; hexose metabolism. It participates in carbohydrate metabolism; galactose metabolism. In terms of biological role, mutarotase that catalyzes the interconversion of beta-D-galactose and alpha-D-galactose during galactose metabolism. Beta-D-galactose is metabolized in the liver into glucose 1-phosphate, the primary metabolic fuel, by the action of four enzymes that constitute the Leloir pathway: GALM, GALK1 (galactokinase), GALT (galactose-1-phosphate uridylyltransferase) and GALE (UDP-galactose-4'-epimerase). Involved in the maintenance of the equilibrium between the beta- and alpha-anomers of galactose, therefore ensuring a sufficient supply of the alpha-anomer for GALK1. Also active on D-glucose although shows a preference for galactose over glucose. This chain is Galactose mutarotase, found in Homo sapiens (Human).